We begin with the raw amino-acid sequence, 546 residues long: Aladin (546 aa).

Cysteine 2 carries the post-translational modification N-acetylcysteine. Serine 33 is subject to Phosphoserine. WD repeat units lie at residues 142–180, 183–222, 234–274, 280–316, 324–380, 386–433, and 442–482; these read EFAQ…VYNA, TIVP…IWTL, GCAQ…VWDV, VPLP…VWEA, WPTL…IVAD, IQTP…LFRT, and LPCG…IAHI. Phosphoserine is present on residues serine 495, serine 511, serine 522, and serine 525. The tract at residues 500–546 is disordered; it reads RAQEPPAGGGGSIHDLPLFTETSPTSAPWDPLPGPPPVLPHSPHSHL. Residues 529 to 539 are compositionally biased toward pro residues; it reads DPLPGPPPVLP. Phosphoserine is present on serine 541. Residues 544–546 carry the Microbody targeting signal motif; it reads SHL.

Interacts with NDC1, the interaction is required for nuclear pore localization. Interacts with the inactive form aurora kinase AURKA. Interacts with PGRMC2. Widely expressed. Particularly abundant in cerebellum, corpus callosum, adrenal gland, pituitary gland, gastrointestinal structures and fetal lung.

It is found in the nucleus. Its subcellular location is the nuclear pore complex. The protein localises to the cytoplasm. The protein resides in the cytoskeleton. It localises to the spindle pole. It is found in the nucleus envelope. Plays a role in the normal development of the peripheral and central nervous system. Required for the correct localization of aurora kinase AURKA and the microtubule minus end-binding protein NUMA1 as well as a subset of AURKA targets which ensures proper spindle formation and timely chromosome alignment. The sequence is that of Aladin (AAAS) from Homo sapiens (Human).